The sequence spans 415 residues: AP-3 complex subunit mu (415 aa).

The MHD domain occupies 178–414 (SNEVYVDLVE…QTRAGEFDVR (237 aa)).

The protein belongs to the adaptor complexes medium subunit family. As to quaternary structure, adaptor protein complex 3 (AP-3) is a heterotetramer composed of two large adaptins (delta-type subunit and beta-type subunit), a medium adaptin (mu-type subunit) and a small adaptin (sigma-type subunit).

Its subcellular location is the cytoplasm. It localises to the golgi apparatus. The protein localises to the cytoplasmic vesicle membrane. Its function is as follows. Part of the AP-3 complex, an adaptor-related complex which seems to be clathrin-associated. The complex is associated with the Golgi region as well as more peripheral structures. It facilitates the budding of vesicles from the Golgi membrane and may be directly involved in trafficking to the vacuole. It also functions in maintaining the identity of lytic vacuoles and in regulating the transition between storage and lytic vacuoles. The chain is AP-3 complex subunit mu (AP3M) from Arabidopsis thaliana (Mouse-ear cress).